Here is a 256-residue protein sequence, read N- to C-terminus: Complex I assembly factor TIMMDC1, mitochondrial (256 aa).

A disordered region spans residues 1-27 (MAQSDPPKSPDPPLPTSIRNPQTPESG). 2 consecutive transmembrane segments (helical) span residues 111–131 (WGWR…GLTV) and 159–179 (VGLL…GALI).

The protein belongs to the Tim17/Tim22/Tim23 family. As to quaternary structure, associates with the intermediate 315 kDa subcomplex of incompletely assembled complex I.

The protein resides in the mitochondrion membrane. Chaperone protein involved in the assembly of the mitochondrial NADH:ubiquinone oxidoreductase complex (complex I). Participates in constructing the membrane arm of complex I. In Xenopus laevis (African clawed frog), this protein is Complex I assembly factor TIMMDC1, mitochondrial (timmdc1).